Reading from the N-terminus, the 219-residue chain is Ribose-5-phosphate isomerase A (219 aa).

Residues 28–31, 81–84, and 94–97 contribute to the substrate site; these read TGST, DGAD, and KGGG. E103 serves as the catalytic Proton acceptor. K121 contacts substrate.

The protein belongs to the ribose 5-phosphate isomerase family. As to quaternary structure, homodimer.

The catalysed reaction is aldehydo-D-ribose 5-phosphate = D-ribulose 5-phosphate. It functions in the pathway carbohydrate degradation; pentose phosphate pathway; D-ribose 5-phosphate from D-ribulose 5-phosphate (non-oxidative stage): step 1/1. In terms of biological role, catalyzes the reversible conversion of ribose-5-phosphate to ribulose 5-phosphate. This is Ribose-5-phosphate isomerase A from Shigella boydii serotype 18 (strain CDC 3083-94 / BS512).